The following is a 139-amino-acid chain: Immunogenic miracidial antigen 8I' (139 aa).

The disordered stretch occupies residues 61-139 (IDVGDEDYHD…PKKYGSGYKH (79 aa)). Residues 64–85 (GDEDYHDGDDDVDYTDDVDDVD) show a composition bias toward acidic residues. Polar residues predominate over residues 90–103 (SPSQLLQGGYQRNQ).

This sequence belongs to the immunogenic miracidial antigen family.

The chain is Immunogenic miracidial antigen 8I' (8I') from Schistosoma japonicum (Blood fluke).